The chain runs to 290 residues: ATP synthase gamma chain (290 aa).

It belongs to the ATPase gamma chain family. As to quaternary structure, F-type ATPases have 2 components, CF(1) - the catalytic core - and CF(0) - the membrane proton channel. CF(1) has five subunits: alpha(3), beta(3), gamma(1), delta(1), epsilon(1). CF(0) has three main subunits: a, b and c.

The protein localises to the cell membrane. Its function is as follows. Produces ATP from ADP in the presence of a proton gradient across the membrane. The gamma chain is believed to be important in regulating ATPase activity and the flow of protons through the CF(0) complex. This chain is ATP synthase gamma chain, found in Heliobacterium modesticaldum (strain ATCC 51547 / Ice1).